A 291-amino-acid chain; its full sequence is MKIAVYGKGGIGKSTTSCNISVALARRGQKVLQIGCDPKHDSTFTLTGFLIPTIIDTLQSKDYHYEDIWPEDVIHKGYGGVDCVEAGGPPAGAGCGGYVVGETVKLLKELNAFYEYDIILFDVLGDVVCGGFAAPLNYADYCVIITDNGFDALFAANRITASIREKARTHPLRLAGLVGNRTSRRDLINKYVEACPMPVIEVLPIIEDIRVSRVKGKTLFEMVGSEPSLNYVCNYYLGIADQILSQPEGIVPKEIPDRELFSLLSDLYLNPIGGGGQKKNKKEILLGFTRI.

ATP is bound by residues 10–15 and Lys39; that span reads GIGKST. Ser14 is a binding site for Mg(2+). [4Fe-4S] cluster is bound by residues Cys95 and Cys129. 180-181 contacts ATP; sequence NR.

The protein belongs to the NifH/BchL/ChlL family. As to quaternary structure, homodimer. Protochlorophyllide reductase is composed of three subunits; ChlL, ChlN and ChlB. [4Fe-4S] cluster is required as a cofactor.

Its subcellular location is the plastid. It is found in the chloroplast. It catalyses the reaction chlorophyllide a + oxidized 2[4Fe-4S]-[ferredoxin] + 2 ADP + 2 phosphate = protochlorophyllide a + reduced 2[4Fe-4S]-[ferredoxin] + 2 ATP + 2 H2O. The protein operates within porphyrin-containing compound metabolism; chlorophyll biosynthesis (light-independent). Its function is as follows. Component of the dark-operative protochlorophyllide reductase (DPOR) that uses Mg-ATP and reduced ferredoxin to reduce ring D of protochlorophyllide (Pchlide) to form chlorophyllide a (Chlide). This reaction is light-independent. The L component serves as a unique electron donor to the NB-component of the complex, and binds Mg-ATP. In Pinus contorta (Shore pine), this protein is Light-independent protochlorophyllide reductase iron-sulfur ATP-binding protein.